The following is a 185-amino-acid chain: Probable RNA 2'-phosphotransferase (185 aa).

It belongs to the KptA/TPT1 family.

Its function is as follows. Removes the 2'-phosphate from RNA via an intermediate in which the phosphate is ADP-ribosylated by NAD followed by a presumed transesterification to release the RNA and generate ADP-ribose 1''-2''-cyclic phosphate (APPR&gt;P). May function as an ADP-ribosylase. This is Probable RNA 2'-phosphotransferase from Bacillus thuringiensis subsp. konkukian (strain 97-27).